The primary structure comprises 137 residues: Small ribosomal subunit protein uS9 (137 aa).

Positions 105-117 (LKVEGYLTRDPRA) are enriched in basic and acidic residues. The segment at 105–137 (LKVEGYLTRDPRAKERKKYGLRKARKAPQYSKR) is disordered. A compositionally biased stretch (basic residues) spans 118-137 (KERKKYGLRKARKAPQYSKR).

The protein belongs to the universal ribosomal protein uS9 family.

This Cyanothece sp. (strain PCC 7425 / ATCC 29141) protein is Small ribosomal subunit protein uS9.